The following is a 203-amino-acid chain: CASP-like protein 2U6 (203 aa).

Topologically, residues 1–31 (MSEHRIPVAADKKISPPISAGEQKGCKGLKR) are cytoplasmic. The chain crosses the membrane as a helical span at residues 32–52 (TDLMLRFAAFVCCTVTMVVLI). Residues 53-84 (TDKQTSAIQVPGFNNLTITKTVSFDLAKAFVY) are Extracellular-facing. N-linked (GlcNAc...) asparagine glycosylation is present at asparagine 67. Residues 85–105 (LVSAAGIGAGYTLLVLVLSII) form a helical membrane-spanning segment. Topologically, residues 106 to 111 (SAERSK) are cytoplasmic. A helical membrane pass occupies residues 112–132 (AIAWFIFVFDQLITYVLLAAA). The Extracellular portion of the chain corresponds to 133-164 (AASTEVAYMGAHAPPEASWLKVCSLFGRFCHQ). The chain crosses the membrane as a helical span at residues 165 to 185 (LGASLVTSLISTVLFAFSAAI). The Cytoplasmic portion of the chain corresponds to 186-203 (SAYYLFSNTNVRPAYSKG).

Belongs to the Casparian strip membrane proteins (CASP) family. In terms of assembly, homodimer and heterodimers.

The protein localises to the cell membrane. In Selaginella moellendorffii (Spikemoss), this protein is CASP-like protein 2U6.